A 530-amino-acid chain; its full sequence is Ubiquitin carboxyl-terminal hydrolase 17-like protein 17 (530 aa).

Positions 80 to 375 (AGLQNMGNTC…QAYVLFYIQK (296 aa)) constitute a USP domain. The Nucleophile role is filled by cysteine 89. Residue histidine 334 is the Proton acceptor of the active site. Composition is skewed to basic and acidic residues over residues 382–392 (SESVSRGREPR) and 398–411 (DTDR…LKRD). Disordered regions lie at residues 382–411 (SESV…LKRD) and 477–530 (NHHP…LVCQ). The span at 493–505 (TPTHQESMNTGTL) shows a compositional bias: polar residues. Residues 510-524 (GRARRSKGKNKHSKR) show a composition bias toward basic residues.

It belongs to the peptidase C19 family. USP17 subfamily.

The protein localises to the nucleus. It is found in the endoplasmic reticulum. It catalyses the reaction Thiol-dependent hydrolysis of ester, thioester, amide, peptide and isopeptide bonds formed by the C-terminal Gly of ubiquitin (a 76-residue protein attached to proteins as an intracellular targeting signal).. In terms of biological role, deubiquitinating enzyme that removes conjugated ubiquitin from specific proteins to regulate different cellular processes that may include cell proliferation, progression through the cell cycle, apoptosis, cell migration, and the cellular response to viral infection. The polypeptide is Ubiquitin carboxyl-terminal hydrolase 17-like protein 17 (USP17L17) (Homo sapiens (Human)).